The following is a 135-amino-acid chain: UPF0102 protein Aave_0630 (135 aa).

Positions 1 to 21 are disordered; the sequence is MGILEKKTAGPGGAARKTTTR.

This sequence belongs to the UPF0102 family.

The protein is UPF0102 protein Aave_0630 of Paracidovorax citrulli (strain AAC00-1) (Acidovorax citrulli).